The primary structure comprises 203 residues: ATP-dependent Clp protease proteolytic subunit (203 aa).

Catalysis depends on Ser-107, which acts as the Nucleophile. His-132 is a catalytic residue.

This sequence belongs to the peptidase S14 family. In terms of assembly, fourteen ClpP subunits assemble into 2 heptameric rings which stack back to back to give a disk-like structure with a central cavity, resembling the structure of eukaryotic proteasomes.

The protein localises to the cytoplasm. The catalysed reaction is Hydrolysis of proteins to small peptides in the presence of ATP and magnesium. alpha-casein is the usual test substrate. In the absence of ATP, only oligopeptides shorter than five residues are hydrolyzed (such as succinyl-Leu-Tyr-|-NHMec, and Leu-Tyr-Leu-|-Tyr-Trp, in which cleavage of the -Tyr-|-Leu- and -Tyr-|-Trp bonds also occurs).. Cleaves peptides in various proteins in a process that requires ATP hydrolysis. Has a chymotrypsin-like activity. Plays a major role in the degradation of misfolded proteins. This chain is ATP-dependent Clp protease proteolytic subunit, found in Shewanella piezotolerans (strain WP3 / JCM 13877).